Consider the following 113-residue polypeptide: Hydrogenase maturation factor HypA (113 aa).

Residue histidine 2 coordinates Ni(2+). Positions 73, 76, 89, and 92 each coordinate Zn(2+).

The protein belongs to the HypA/HybF family.

Its function is as follows. Involved in the maturation of [NiFe] hydrogenases. Required for nickel insertion into the metal center of the hydrogenase. This is Hydrogenase maturation factor HypA from Azotobacter vinelandii.